Here is a 79-residue protein sequence, read N- to C-terminus: Short neurotoxin 2 (79 aa).

The signal sequence occupies residues 1–19 (PLLLTLVVVTIVCLDLGYT). 4 cysteine pairs are disulfide-bonded: Cys-22-Cys-41, Cys-36-Cys-58, Cys-60-Cys-71, and Cys-72-Cys-77.

This sequence belongs to the three-finger toxin family. Short-chain subfamily. Type I alpha-neurotoxin sub-subfamily. As to expression, expressed by the venom gland.

It is found in the secreted. Its function is as follows. Binds to muscle nicotinic acetylcholine receptor (nAChR) and inhibit acetylcholine from binding to the receptor, thereby impairing neuromuscular transmission. The chain is Short neurotoxin 2 from Hydrophis cyanocinctus (Asian annulated sea snake).